We begin with the raw amino-acid sequence, 91 residues long: Acylphosphatase (91 aa).

In terms of domain architecture, Acylphosphatase-like spans 4 to 91 (RAMVTVKGMV…GEFDDFHIAY (88 aa)). Active-site residues include Arg19 and Asn37.

This sequence belongs to the acylphosphatase family.

The enzyme catalyses an acyl phosphate + H2O = a carboxylate + phosphate + H(+). The protein is Acylphosphatase (acyP) of Geotalea uraniireducens (strain Rf4) (Geobacter uraniireducens).